The sequence spans 670 residues: Oligopeptidase PepF (670 aa).

A Zn(2+)-binding site is contributed by His-456. Glu-457 is a catalytic residue. Zn(2+) contacts are provided by His-460 and His-463.

This sequence belongs to the peptidase M3B family. It depends on Zn(2+) as a cofactor.

It localises to the cytoplasm. Its function is as follows. Overexpression results in inhibition of sporulation initiation. This sporulation deficiency could be the result of hydrolysis by PepF of the PhrA peptide, a phosphatase regulator. Thus, overexpression of PepF appears to act at the level of the phosphorelay, most likely through modulation of the negative role played by phosphatases. Overexpression of PepF also affects the activity of the competence and sporulation stimulating factor PhrC. The sequence is that of Oligopeptidase PepF from Bacillus subtilis (strain 168).